Reading from the N-terminus, the 88-residue chain is Small ribosomal subunit protein bS20 (88 aa).

Belongs to the bacterial ribosomal protein bS20 family.

Binds directly to 16S ribosomal RNA. The sequence is that of Small ribosomal subunit protein bS20 from Desulforamulus reducens (strain ATCC BAA-1160 / DSM 100696 / MI-1) (Desulfotomaculum reducens).